Consider the following 440-residue polypeptide: Chromosome partition protein MukF (440 aa).

Residues 208 to 236 are leucine-zipper; sequence LSETSGTLRELQDTLEAAGDKLQANLLRI.

This sequence belongs to the MukF family. As to quaternary structure, interacts, and probably forms a ternary complex, with MukE and MukB via its C-terminal region. The complex formation is stimulated by calcium or magnesium. It is required for an interaction between MukE and MukB.

It is found in the cytoplasm. It localises to the nucleoid. Functionally, involved in chromosome condensation, segregation and cell cycle progression. May participate in facilitating chromosome segregation by condensation DNA from both sides of a centrally located replisome during cell division. Not required for mini-F plasmid partitioning. Probably acts via its interaction with MukB and MukE. Overexpression results in anucleate cells. It has a calcium binding activity. In Yersinia enterocolitica serotype O:8 / biotype 1B (strain NCTC 13174 / 8081), this protein is Chromosome partition protein MukF.